A 309-amino-acid chain; its full sequence is Ornithine carbamoyltransferase (309 aa).

Residues 57–60 (STRT), Gln-84, Arg-108, and 135–138 (HPCQ) contribute to the carbamoyl phosphate site. Residues Asn-166, Asp-224, and 228–229 (SM) each bind L-ornithine. Carbamoyl phosphate contacts are provided by residues 264–265 (CL) and Arg-292.

The protein belongs to the aspartate/ornithine carbamoyltransferase superfamily. OTCase family.

The protein resides in the cytoplasm. It carries out the reaction carbamoyl phosphate + L-ornithine = L-citrulline + phosphate + H(+). Its pathway is amino-acid biosynthesis; L-arginine biosynthesis; L-arginine from L-ornithine and carbamoyl phosphate: step 1/3. Its function is as follows. Reversibly catalyzes the transfer of the carbamoyl group from carbamoyl phosphate (CP) to the N(epsilon) atom of ornithine (ORN) to produce L-citrulline. In Paracidovorax citrulli (strain AAC00-1) (Acidovorax citrulli), this protein is Ornithine carbamoyltransferase.